Reading from the N-terminus, the 203-residue chain is Holliday junction branch migration complex subunit RuvA (203 aa).

The segment at 1–63 (MIAFVSGPVA…EDSLTLYGFV (63 aa)) is domain I. The interval 64–141 (DDDERQVFEL…GEPLGTGGPA (78 aa)) is domain II. The tract at residues 141–145 (AIGRA) is flexible linker. The domain III stretch occupies residues 146-203 (VTTGWREQLHAALIGLGYATREADEAVAAVAPQAEAAGGTPQVGQLLKAALQTLNRTR).

Belongs to the RuvA family. As to quaternary structure, homotetramer. Forms an RuvA(8)-RuvB(12)-Holliday junction (HJ) complex. HJ DNA is sandwiched between 2 RuvA tetramers; dsDNA enters through RuvA and exits via RuvB. An RuvB hexamer assembles on each DNA strand where it exits the tetramer. Each RuvB hexamer is contacted by two RuvA subunits (via domain III) on 2 adjacent RuvB subunits; this complex drives branch migration. In the full resolvosome a probable DNA-RuvA(4)-RuvB(12)-RuvC(2) complex forms which resolves the HJ.

Its subcellular location is the cytoplasm. In terms of biological role, the RuvA-RuvB-RuvC complex processes Holliday junction (HJ) DNA during genetic recombination and DNA repair, while the RuvA-RuvB complex plays an important role in the rescue of blocked DNA replication forks via replication fork reversal (RFR). RuvA specifically binds to HJ cruciform DNA, conferring on it an open structure. The RuvB hexamer acts as an ATP-dependent pump, pulling dsDNA into and through the RuvAB complex. HJ branch migration allows RuvC to scan DNA until it finds its consensus sequence, where it cleaves and resolves the cruciform DNA. The sequence is that of Holliday junction branch migration complex subunit RuvA from Streptomyces avermitilis (strain ATCC 31267 / DSM 46492 / JCM 5070 / NBRC 14893 / NCIMB 12804 / NRRL 8165 / MA-4680).